The sequence spans 166 residues: Phosphopantetheine adenylyltransferase (166 aa).

S11 lines the substrate pocket. ATP-binding positions include 11–12 (SF) and H19. Substrate-binding residues include K43, L75, and R89. ATP is bound by residues 90 to 92 (GLR), E100, and 125 to 131 (YGYLSSS).

This sequence belongs to the bacterial CoaD family. As to quaternary structure, homohexamer. Requires Mg(2+) as cofactor.

The protein resides in the cytoplasm. It carries out the reaction (R)-4'-phosphopantetheine + ATP + H(+) = 3'-dephospho-CoA + diphosphate. It functions in the pathway cofactor biosynthesis; coenzyme A biosynthesis; CoA from (R)-pantothenate: step 4/5. Functionally, reversibly transfers an adenylyl group from ATP to 4'-phosphopantetheine, yielding dephospho-CoA (dPCoA) and pyrophosphate. The chain is Phosphopantetheine adenylyltransferase from Syntrophotalea carbinolica (strain DSM 2380 / NBRC 103641 / GraBd1) (Pelobacter carbinolicus).